A 147-amino-acid chain; its full sequence is UPF0260 protein Ent638_2368 (147 aa).

The protein belongs to the UPF0260 family.

This chain is UPF0260 protein Ent638_2368, found in Enterobacter sp. (strain 638).